A 314-amino-acid chain; its full sequence is Glycine--tRNA ligase alpha subunit (314 aa).

The protein belongs to the class-II aminoacyl-tRNA synthetase family. Tetramer of two alpha and two beta subunits.

The protein resides in the cytoplasm. It catalyses the reaction tRNA(Gly) + glycine + ATP = glycyl-tRNA(Gly) + AMP + diphosphate. In Leuconostoc citreum (strain KM20), this protein is Glycine--tRNA ligase alpha subunit.